Consider the following 3072-residue polypeptide: Platelet binding protein GspB (3072 aa).

Positions 1 to 85 are cleaved as a signal peptide; sequence MFFKRQKGQY…AVLGGAVVTS (85 aa). 10 disordered regions span residues 117–147, 182–254, 876–909, 936–969, 1024–2085, 2106–2139, 2173–2223, 2250–2595, 2625–2965, and 3014–3045; these read EAATTLSSTEANPVESLSDTLSASESTSASS, SESL…APNV, SASTSASVSASESASTSASVSASESASTSASVSA, SASV…SVSA, VSAS…SVSA, SAST…SVSA, TSAS…NASV, and SQSLSESQSSSASQSMHDRISKGQLPRTGESE. The span at 118 to 127 shows a compositional bias: polar residues; sequence AATTLSSTEA. The tract at residues 123 to 236 is ser-rich region 1 (SSR1); it reads SSTEANPVES…SSQQSTEASS (114 aa). Low complexity-rich tracts occupy residues 131 to 147 and 182 to 238; these read ESLSDTLSASESTSASS and SESL…SSQT. Positions 237-603 are basic region (BR); that stretch reads QTGRRRTRRA…GSKFIDTRAG (367 aa). Residues 604 to 3028 are ser-rich region 2 (SSR2); that stretch reads SISKSQSTSN…ESQSSSASQS (2425 aa). The span at 3014-3028 shows a compositional bias: low complexity; the sequence is SQSLSESQSSSASQS. Positions 3038–3042 match the LPXTG sorting signal motif; the sequence is LPRTG. A Pentaglycyl murein peptidoglycan amidated threonine modification is found at T3041. Positions 3042 to 3072 are cleaved as a propeptide — removed by sortase; it reads GESENKASILALGLGALGLAFKKRKKNESED.

This sequence belongs to the serine-rich repeat protein (SRRP) family. As to quaternary structure, both SSR domains in the unglycosylated protein bind to Asp2 and Asp3; glycosylated protein binds less well. Interacts with the human cell surface glycoprotein GP1BA. Proteolytically cleaved by a metalloprotease. Post-translationally, both SSR1 and SSR2 domains are glycosylated. A truncated derivative (residues 1-2062) contains 105 nmol per nmol of protein, suggesting at least 10% of the apparent molecular weight is due to carbohydrates. Glucose and N-acetylglucosamine are present in a ratio of 30:73 residues per truncated polypeptide, as well as minor amounts of galactose and N-acetylgalactosamine. Glycosylation occurs intracellularly in the Ser-rich regions SSR1 and SSR2. Glycosylation of SSR2 domain may be required to prevent aggregation of GspB. It is probable that most of the Ser residues in SSR1 and SSR2 are O-GlcNAcylated. Sequential glycosylation by sugar transferases are able to generate complex sugar polymorphisms.

It is found in the secreted. Its subcellular location is the cell wall. Plays a role in virulence and host-pathogen interactions. Mediates binding to human platelets via interaction with the human cell surface glycoprotein GP1BA. Plays a positive role in biofilm formation, possibly by self-association via the basic region (BR). In Streptococcus gordonii, this protein is Platelet binding protein GspB (gspB).